The primary structure comprises 163 residues: Cell division protein SepF (163 aa).

Residues 25-53 (SVAPHSGEERESAFSRRSAERAERTERPT) form a disordered region. A compositionally biased stretch (basic and acidic residues) spans 30–51 (SGEERESAFSRRSAERAERTER).

Belongs to the SepF family. As to quaternary structure, homodimer. Interacts with FtsZ.

The protein resides in the cytoplasm. Cell division protein that is part of the divisome complex and is recruited early to the Z-ring. Probably stimulates Z-ring formation, perhaps through the cross-linking of FtsZ protofilaments. Its function overlaps with FtsA. This Heliobacterium modesticaldum (strain ATCC 51547 / Ice1) protein is Cell division protein SepF.